The following is a 65-amino-acid chain: MLPKMQPSAQCLIVFSLAFVLGWYVLRPGNTSCVLLITGESVRLVNCELTKDLVEAVLLRPLKHL.

At 1–6 the chain is on the lumenal side; it reads MLPKMQ. Residues 7–26 traverse the membrane as a helical segment; sequence PSAQCLIVFSLAFVLGWYVL. At 27 to 65 the chain is on the cytoplasmic side; it reads RPGNTSCVLLITGESVRLVNCELTKDLVEAVLLRPLKHL.

Belongs to the Tymovirales TGBp3 protein family.

It localises to the host endoplasmic reticulum membrane. Plays a role in viral cell-to-cell propagation, by facilitating genome transport to neighboring plant cells through plasmosdesmata. May induce the formation of granular vesicles derived from the Endoplasmic reticulum, which align on actin filaments. The polypeptide is Movement protein TGBp3 (Potato virus S (strain Peruvian)).